Here is a 66-residue protein sequence, read N- to C-terminus: Large ribosomal subunit protein uL29 (66 aa).

This sequence belongs to the universal ribosomal protein uL29 family.

This is Large ribosomal subunit protein uL29 from Borrelia duttonii (strain Ly).